Reading from the N-terminus, the 209-residue chain is MATPLSPAFFDRDPVKVAREVLGSTLVRVLPGGEVLSGRVVEVEAYDCPRDPACTAGRFHAARTAEMAISPGHWLFWTAHGHPLLQVSCREKGIPASILIRALEPLTGLGSMLTHRPVSRERELTNGPAKLVSALGLKPAEVVGTRVDSPALHLLPPPALLPADAVTVTARIGIKEGRNLPWRFLLRGNPWVSPGVPSMDLAGPLTAKS.

Belongs to the DNA glycosylase MPG family.

This is Putative 3-methyladenine DNA glycosylase from Deinococcus geothermalis (strain DSM 11300 / CIP 105573 / AG-3a).